The sequence spans 236 residues: Phosphoribosylaminoimidazole-succinocarboxamide synthase (236 aa).

The protein belongs to the SAICAR synthetase family.

The enzyme catalyses 5-amino-1-(5-phospho-D-ribosyl)imidazole-4-carboxylate + L-aspartate + ATP = (2S)-2-[5-amino-1-(5-phospho-beta-D-ribosyl)imidazole-4-carboxamido]succinate + ADP + phosphate + 2 H(+). It participates in purine metabolism; IMP biosynthesis via de novo pathway; 5-amino-1-(5-phospho-D-ribosyl)imidazole-4-carboxamide from 5-amino-1-(5-phospho-D-ribosyl)imidazole-4-carboxylate: step 1/2. The chain is Phosphoribosylaminoimidazole-succinocarboxamide synthase from Cellvibrio japonicus (strain Ueda107) (Pseudomonas fluorescens subsp. cellulosa).